The following is a 194-amino-acid chain: Holliday junction branch migration complex subunit RuvA (194 aa).

Residues 1–63 form a domain I region; the sequence is MFEYMKGMIV…EDEAHLYGFV (63 aa). The interval 64-142 is domain II; that stretch reads DKEELAMFKK…DSQVEYDQNF (79 aa). The segment at 143–146 is flexible linker; it reads FNHE. The segment at 146-194 is domain III; it reads ENKNNNEVVDALMALGYTKHEGEQAASAVRDTSLSTEEMIRKALNWLAR.

The protein belongs to the RuvA family. As to quaternary structure, homotetramer. Forms an RuvA(8)-RuvB(12)-Holliday junction (HJ) complex. HJ DNA is sandwiched between 2 RuvA tetramers; dsDNA enters through RuvA and exits via RuvB. An RuvB hexamer assembles on each DNA strand where it exits the tetramer. Each RuvB hexamer is contacted by two RuvA subunits (via domain III) on 2 adjacent RuvB subunits; this complex drives branch migration. In the full resolvosome a probable DNA-RuvA(4)-RuvB(12)-RuvC(2) complex forms which resolves the HJ.

It is found in the cytoplasm. Functionally, the RuvA-RuvB-RuvC complex processes Holliday junction (HJ) DNA during genetic recombination and DNA repair, while the RuvA-RuvB complex plays an important role in the rescue of blocked DNA replication forks via replication fork reversal (RFR). RuvA specifically binds to HJ cruciform DNA, conferring on it an open structure. The RuvB hexamer acts as an ATP-dependent pump, pulling dsDNA into and through the RuvAB complex. HJ branch migration allows RuvC to scan DNA until it finds its consensus sequence, where it cleaves and resolves the cruciform DNA. This Alkaliphilus metalliredigens (strain QYMF) protein is Holliday junction branch migration complex subunit RuvA.